Consider the following 927-residue polypeptide: Perchlorate reductase subunit alpha (927 aa).

The tat-type signal signal peptide spans 1 to 31 (MVQMTRRGFLLASGATLLGSSLSFRTLAAAA). One can recognise a 4Fe-4S Mo/W bis-MGD-type domain in the interval 53 to 116 (DKKTRGAHLI…CAHDYMYGPH (64 aa)). His-60, Cys-64, Cys-68, and Cys-102 together coordinate [4Fe-4S] cluster. Residue Asp-198 coordinates Mo-bis(molybdopterin guanine dinucleotide).

This sequence belongs to the prokaryotic molybdopterin-containing oxidoreductase family. As to quaternary structure, heterotrimer of alpha, beta and gamma subunits. [4Fe-4S] cluster serves as cofactor. Requires Mo-bis(molybdopterin guanine dinucleotide) as cofactor. Predicted to be exported by the Tat system. The position of the signal peptide cleavage has not been experimentally proven.

The protein localises to the periplasm. Its function is as follows. Component of the perchlorate reductase that catalyzes the reduction of perchlorate to chlorite and allows anaerobic growth on perchlorate as the sole electron acceptor. Is probably also able to reduce chlorate to chlorite. The alpha subunit is likely the catalytic subunit. The sequence is that of Perchlorate reductase subunit alpha (pcrA) from Dechloromonas aromatica (strain RCB).